Here is a 195-residue protein sequence, read N- to C-terminus: Endoribonuclease YbeY (195 aa).

3 residues coordinate Zn(2+): histidine 152, histidine 156, and histidine 162.

The protein belongs to the endoribonuclease YbeY family. Zn(2+) is required as a cofactor.

It is found in the cytoplasm. Its function is as follows. Single strand-specific metallo-endoribonuclease involved in late-stage 70S ribosome quality control and in maturation of the 3' terminus of the 16S rRNA. In Rhodopseudomonas palustris (strain BisB5), this protein is Endoribonuclease YbeY.